The primary structure comprises 152 residues: Clitocypin-2 (152 aa).

Belongs to the protease inhibitor I48 family. In terms of assembly, homodimer. Expressed in all analyzed tissues, but expression was higher in the pileus and in the lower part of the stipe.

Functionally, binds and inhibits cysteine proteinases. Inhibits most strongly papain and cathepsin L, more weakly bromelain and cathepsin B while it is completely ineffective against cathepsin H. This is Clitocypin-2 (clt2) from Clitocybe nebularis (Clouded agaric).